The chain runs to 1207 residues: Dermatan-sulfate epimerase-like protein (1207 aa).

Residues 1–22 (MAFMFTEHLLFLTLMMCSFSTC) form the signal peptide. N-linked (GlcNAc...) asparagine glycosylation is found at Asn-28, Asn-661, Asn-683, and Asn-704. Helical transmembrane passes span 761–781 (FPFG…SLVI) and 798–818 (CVLI…WSTC). Asn-869 carries N-linked (GlcNAc...) asparagine glycosylation.

It belongs to the dermatan-sulfate isomerase family.

Its subcellular location is the membrane. In Mus musculus (Mouse), this protein is Dermatan-sulfate epimerase-like protein (Dsel).